The sequence spans 194 residues: dTTP/UTP pyrophosphatase (194 aa).

Asp73 acts as the Proton acceptor in catalysis.

The protein belongs to the Maf family. YhdE subfamily. It depends on a divalent metal cation as a cofactor.

It localises to the cytoplasm. The enzyme catalyses dTTP + H2O = dTMP + diphosphate + H(+). It catalyses the reaction UTP + H2O = UMP + diphosphate + H(+). Functionally, nucleoside triphosphate pyrophosphatase that hydrolyzes dTTP and UTP. May have a dual role in cell division arrest and in preventing the incorporation of modified nucleotides into cellular nucleic acids. The chain is dTTP/UTP pyrophosphatase from Geotalea uraniireducens (strain Rf4) (Geobacter uraniireducens).